We begin with the raw amino-acid sequence, 266 residues long: Norfluorocurarine synthase 2 (266 aa).

The AB hydrolase-1 domain occupies 11–121 (HFVLVHGAGH…VMPDSTHPPN (111 aa)). Residues Ser-86, Asp-216, and His-244 contribute to the active site.

This sequence belongs to the AB hydrolase superfamily. In terms of assembly, homodimer.

It carries out the reaction 17-dehydropreakuammicine + H2O = norfluorocurarine + methanol + CO2. Its pathway is alkaloid biosynthesis. Its function is as follows. Hydrolase involved in the biosynthesis of curare monoterpene indole alkaloids (MIAs), natural products such as diaboline, a pharmacologically active compound used to regulate blood pressure. Curare alkaloids act as animal glycine receptor antagonists. Catalyzes the conversion of dehydropreakuammicine to norfluorocurarine. The sequence is that of Norfluorocurarine synthase 2 from Strychnos sp.